The following is a 198-amino-acid chain: Glycerol-3-phosphate acyltransferase (198 aa).

A run of 5 helical transmembrane segments spans residues 2–22 (YAVLTAIIAYLIGCINNAYIF), 48–70 (LGYKAAAPVFALDVLKGVIAVLI), 75–97 (MGNTGAMIAGIAVVCGHNWPVFL), 111–131 (VVMTVSPLLGLIALAIGVTVI), and 154–174 (IFWNSTQIFIFSLILASLAIF).

Belongs to the PlsY family. As to quaternary structure, probably interacts with PlsX.

It is found in the cell membrane. The catalysed reaction is an acyl phosphate + sn-glycerol 3-phosphate = a 1-acyl-sn-glycero-3-phosphate + phosphate. It participates in lipid metabolism; phospholipid metabolism. In terms of biological role, catalyzes the transfer of an acyl group from acyl-phosphate (acyl-PO(4)) to glycerol-3-phosphate (G3P) to form lysophosphatidic acid (LPA). This enzyme utilizes acyl-phosphate as fatty acyl donor, but not acyl-CoA or acyl-ACP. This chain is Glycerol-3-phosphate acyltransferase, found in Thermoanaerobacter sp. (strain X514).